The chain runs to 135 residues: Flagellar assembly factor FliW 2 (135 aa).

The protein belongs to the FliW family. Interacts with translational regulator CsrA and flagellin(s).

The protein resides in the cytoplasm. In terms of biological role, acts as an anti-CsrA protein, binds CsrA and prevents it from repressing translation of its target genes, one of which is flagellin. Binds to flagellin and participates in the assembly of the flagellum. The sequence is that of Flagellar assembly factor FliW 2 from Helicobacter acinonychis (strain Sheeba).